The primary structure comprises 209 residues: Kinetochore protein Spc25 (209 aa).

A coiled-coil region spans residues 74–107 (TRAVREKLAEERQKNAEMQAQLEKANDERIEQMD).

It belongs to the SPC25 family. As to quaternary structure, component of the Ndc80 complex, which is composed of Ndc80, Nuf2 and Spc25.

It is found in the nucleus. The protein localises to the chromosome. The protein resides in the centromere. Its subcellular location is the kinetochore. In terms of biological role, acts as a component of the essential kinetochore-associated Ndc80 complex, which is required for chromosome segregation and spindle checkpoint activity during meiosis and mitosis. Required for kinetochore integrity and the organization of stable microtubule binding sites in the outer plate of the kinetochore. Participates in SAC signaling that responds specifically to disruptions in spindle microtubule dynamics. The NDC80 complex synergistically enhances the affinity of the SKA1 complex for microtubules and may allow the NDC80 complex to track depolymerizing microtubules. This Drosophila grimshawi (Hawaiian fruit fly) protein is Kinetochore protein Spc25.